The chain runs to 417 residues: MSEIRNYTLNFGPQHPSAHGVLRLVLELDGETIVRSDPHIGLLHRGTEKLAEYKPFNQSIGYMDRLDYVSMMANEHAYVMGIEKMLGIEVPERAQYIRVMFDEITRILNHLMWLGAHALDIGAMTVFLYAFREREDLMDCYEAVSGARMHATYYRPGGVYRDLPDTMAKYEESKWHSGKKLDQLNETREGSLLDFIEAFTERFPGYVDEYETLLTDNRIWKQRTVDIGIVSPERALQLGFTGPMLRGSGIAWDLRKKQPYEVYDKLDFDIPVGATGDCYDRYLVRVAEMRESNKIIKQCVKWLKENPGPVISDDHKVTPPSREDAKSNMEALIHHFKLFTEGYSVPEGESYTAVEHPKGEFGIYMVSDGANKPYRLKVRAPGFAHLASLDEMAKGHMIADVVAIIGTQDIVFGEVDR.

The protein belongs to the complex I 49 kDa subunit family. In terms of assembly, NDH-1 is composed of 14 different subunits. Subunits NuoB, C, D, E, F, and G constitute the peripheral sector of the complex.

The protein resides in the cell inner membrane. The catalysed reaction is a quinone + NADH + 5 H(+)(in) = a quinol + NAD(+) + 4 H(+)(out). Its function is as follows. NDH-1 shuttles electrons from NADH, via FMN and iron-sulfur (Fe-S) centers, to quinones in the respiratory chain. The immediate electron acceptor for the enzyme in this species is believed to be ubiquinone. Couples the redox reaction to proton translocation (for every two electrons transferred, four hydrogen ions are translocated across the cytoplasmic membrane), and thus conserves the redox energy in a proton gradient. The polypeptide is NADH-quinone oxidoreductase subunit D (Hydrogenovibrio crunogenus (strain DSM 25203 / XCL-2) (Thiomicrospira crunogena)).